The following is a 274-amino-acid chain: Probable cyclic nucleotide phosphodiesterase RPA0124 (274 aa).

Fe cation is bound by residues Asp8, His10, Asp49, Asn79, His155, His194, and His196. AMP is bound by residues His10, Asp49, and 79–80 (NH). Residue His196 coordinates AMP.

This sequence belongs to the cyclic nucleotide phosphodiesterase class-III family. Fe(2+) is required as a cofactor.

This Rhodopseudomonas palustris (strain ATCC BAA-98 / CGA009) protein is Probable cyclic nucleotide phosphodiesterase RPA0124.